The primary structure comprises 520 residues: Laccase-1 (520 aa).

The first 21 residues, 1–21 (MSRFHSLLAFVVASLTAVAHA), serve as a signal peptide directing secretion. 2 Plastocyanin-like domains span residues 23–148 (IGPV…FVVY) and 160–302 (VDND…ILRY). Asn-72 and Asn-75 each carry an N-linked (GlcNAc...) asparagine glycan. Positions 85, 87, 130, and 132 each coordinate Cu cation. Disulfide bonds link Cys-106–Cys-509 and Cys-138–Cys-226. N-linked (GlcNAc...) asparagine glycosylation is found at Asn-229, Asn-238, Asn-354, and Asn-361. Residues 369-491 (TVPVLLQIIS…AGFAVVFAED (123 aa)) enclose the Plastocyanin-like 3 domain. Cu cation is bound by residues His-416, His-419, His-421, His-473, Cys-474, His-475, and His-479.

The protein belongs to the multicopper oxidase family. As to quaternary structure, homodimer. It depends on Cu cation as a cofactor.

The protein localises to the secreted. The enzyme catalyses 4 hydroquinone + O2 = 4 benzosemiquinone + 2 H2O. In terms of biological role, lignin degradation and detoxification of lignin-derived products. The sequence is that of Laccase-1 from Trametes villosa (White-rot fungus).